The primary structure comprises 398 residues: Secreted aspartic protease 2 (398 aa).

An N-terminal signal peptide occupies residues 1 to 18 (MFLKNIFIALAIALLVDA). Positions 19–56 (TPTTTKRSAGFVALDFSVVKTPKAFPVTNGQEGKTSKR) are cleaved as a propeptide — activation peptide. Residues 70–384 (YAADITVGSN…DLDDNEISLA (315 aa)) enclose the Peptidase A1 domain. The active site involves Asp88. 88 to 90 (DTG) contacts pepstatin A. Cysteines 103 and 115 form a disulfide. Position 141 to 142 (141 to 142 (GD)) interacts with pepstatin A. The Zn(2+) site is built by Asp247 and Asp270. The active site involves Asp274. A pepstatin A-binding site is contributed by 274 to 278 (DSGTT). A disulfide bridge connects residues Cys312 and Cys350. N-linked (GlcNAc...) asparagine glycans are attached at residues Asn313 and Asn321.

This sequence belongs to the peptidase A1 family. As to quaternary structure, monomer.

Its subcellular location is the secreted. It catalyses the reaction Preferential cleavage at the carboxyl of hydrophobic amino acids, but fails to cleave 15-Leu-|-Tyr-16, 16-Tyr-|-Leu-17 and 24-Phe-|-Phe-25 of insulin B chain. Activates trypsinogen, and degrades keratin.. In terms of biological role, secreted aspartic peptidases (SAPs) are a group of ten acidic hydrolases considered as key virulence factors. These enzymes supply the fungus with nutrient amino acids as well as are able to degrade the selected host's proteins involved in the immune defense. Induces host inflammatory cytokine production in a proteolytic activity-independent way. Plays a role in tissue damage during superficial infection. Moreover, acts toward human hemoglobin though limited proteolysis to generate a variety of antimicrobial hemocidins, enabling to compete with the other microorganisms of the same physiological niche using the microbicidal peptides generated from the host protein. Plays a key role in defense against host by cleaving histatin-5 (Hst 5), a peptide from human saliva that carries out fungicidal activity. The cleavage rate decreases in an order of SAP2 &gt; SAP9 &gt; SAP3 &gt; SAP7 &gt; SAP4 &gt; SAP1 &gt; SAP8. The first cleavage occurs between residues 'Lys-17' and 'His-18' of Hst 5, giving DSHAKRHHGYKRKFHEK and HHSHRGY peptides. Simultaneously, the DSHAKRHHGYKRK peptide is also formed. Further fragmentation by SAP2 results in FHEK and DSHAKRHHGY products. In Candida albicans (Yeast), this protein is Secreted aspartic protease 2.